The chain runs to 224 residues: MKIVVKVGGSAIVQGLDAQRFKDYADVIKQLAEDHTILIVIGGGTPARDYINVSKQLGANNSILDYIGIGVSRLNARLLISALGDIAYPEPPYDYKDAGLAMYSGKVVVMGGVVPGQTTDAVAAILAEYVHADLLIRTTSVDGVFTADPKLDPKATKIDSMTPQELVDMVTKIEMTAGANNIFDPLGAQIVKRSRIPTVVVNGKQPENLIKAVKGEPIGTIIKE.

9 to 10 (GS) serves as a coordination point for ATP. Residue Gly-43 participates in UMP binding. ATP contacts are provided by Gly-44 and Arg-48. Residues Asp-65 and 113–119 (VVPGQTT) contribute to the UMP site. ATP-binding residues include Thr-139, Phe-145, and Asp-148.

It belongs to the UMP kinase family. As to quaternary structure, homohexamer.

The protein resides in the cytoplasm. It catalyses the reaction UMP + ATP = UDP + ADP. The protein operates within pyrimidine metabolism; CTP biosynthesis via de novo pathway; UDP from UMP (UMPK route): step 1/1. Inhibited by UTP. Catalyzes the reversible phosphorylation of UMP to UDP. This chain is Uridylate kinase, found in Methanocella arvoryzae (strain DSM 22066 / NBRC 105507 / MRE50).